We begin with the raw amino-acid sequence, 730 residues long: MWVTKLLPLLVLQQLLLHLLLLPVAVPRAEGQKKRRNTLHEFKKSAKTTLIKEDPLLKIKTKKMNTADQCANRCIRNKGLPFTCKAFVFDKARKRCLWFPFNSMTSGVKKEFGHEFDLYENKDYIRNCIIGKGGSYKGTVSITKSGIKCQPWNSMIPHEHSFLPSSYRGKDLQENYCRNPRGEEGGPWCFTSNPEVRYEVCDIPQCSEVECMTCNGESYRGPMDHTESGKICQRWDHQTPHRHKFLPERYPDKGFDDNYCRNPDGKPRPWCYTLDPDTPWEYCAIKMCAHSTMNDTDVPMETTECIQGQGEGYRGTINTIWNGVPCQRWDSQYPHQHDITPENFKCKDLRENYCRNPDGAESPWCFTTDPNIRVGYCSQIPKCDVSSGQDCYRGNGKNYMGNLSKTRSGLTCSMWEKNMEDLHRHIFWEPDASKLNKNYCRNPDDDAHGPWCYTGNPLIPWDYCPIFRCEGDTTPTIVNLDHPVISCAKTKQLRVVNGIPTRTNVGWMVSLKYRNKHICGGSLIKESWILTARQCFPSRNRDLKDYEAWLGIHDVHGKGDEKRKQVLNVSQLVYGPEGSDLVLLKLARPAILDDFVSTIDLPNYGCTIPEKTTCSVYGWGYTGSINFDGLLRVAHLYIMGNEKCSQYHQGKVTLNESEICAGAENIVSGPCEGDYGGPLVCEQHKMRMVLGVIVPGRGCAIPNRPGIFVRVAYYAKWIHKIILTYKIQQS.

The signal sequence occupies residues 1 to 31; that stretch reads MWVTKLLPLLVLQQLLLHLLLLPVAVPRAEG. The residue at position 32 (Q32) is a Pyrrolidone carboxylic acid. A PAN domain is found at 37–123; that stretch reads NTLHEFKKSA…HEFDLYENKD (87 aa). 8 disulfide bridges follow: C70–C96, C74–C84, C128–C206, C149–C189, C177–C201, C211–C288, C232–C271, and C260–C283. 2 Kringle domains span residues 128 to 206 and 211 to 288; these read CIIG…IPQC and CMTC…IKMC. Residue N294 is glycosylated (N-linked (GlcNAc...) asparagine). Disulfide bonds link C305–C383, C326–C365, C354–C377, C391–C469, C412–C452, C440–C464, C487–C606, C519–C535, C614–C681, C644–C660, and C671–C699. Kringle domains follow at residues 305–383 and 391–469; these read CIQG…IPKC and CYRG…IFRC. N402 carries N-linked (GlcNAc...) asparagine glycosylation. The 229-residue stretch at 495–723 folds into the Peptidase S1 domain; the sequence is VVNGIPTRTN…YAKWIHKIIL (229 aa). N-linked (GlcNAc...) asparagine glycans are attached at residues N568 and N655.

It belongs to the peptidase S1 family. Plasminogen subfamily. As to quaternary structure, dimer of an alpha chain and a beta chain linked by a disulfide bond. Interacts with SRPX2; the interaction increases HGF mitogenic activity. The single-chain precursor undergoes proteolytic processing by TMPRSS13 resulting in an active two-chain form. The single-chain precursor undergoes proteolytic processing by HGFAC resulting in an active two-chain form.

Potent mitogen for mature parenchymal hepatocyte cells, seems to be a hepatotrophic factor, and acts as a growth factor for a broad spectrum of tissues and cell types. Activating ligand for the receptor tyrosine kinase MET by binding to it and promoting its dimerization. Activates MAPK signaling following TMPRSS13 cleavage and activation. This is Hepatocyte growth factor (HGF) from Canis lupus familiaris (Dog).